The primary structure comprises 176 residues: Nucleoside triphosphate/diphosphate phosphatase (176 aa).

The active-site Proton donor is Arg23. 6 residues coordinate Mg(2+): Asn87, Asp103, Asp105, Asp107, Asp120, and Glu123.

It belongs to the Ntdp family. Requires Mg(2+) as cofactor.

The catalysed reaction is a ribonucleoside 5'-triphosphate + H2O = a ribonucleoside 5'-diphosphate + phosphate + H(+). The enzyme catalyses a ribonucleoside 5'-diphosphate + H2O = a ribonucleoside 5'-phosphate + phosphate + H(+). Its function is as follows. Has nucleoside phosphatase activity towards nucleoside triphosphates and nucleoside diphosphates. The polypeptide is Nucleoside triphosphate/diphosphate phosphatase (Bacillus cereus (strain AH820)).